A 621-amino-acid chain; its full sequence is MAU2 chromatid cohesion factor homolog (621 aa).

TPR repeat units follow at residues 96–129, 451–484, and 491–524; these read FDTASLLAQLHLQTEQSSHAKAMLRRAVELSQNN, GGFYYVQGLHAFHKNSFHEAKRFLRETLKMANAE, and SCSLVLLSHVFLSIGNSKESMNMVTPAMQLASKI.

The protein belongs to the SCC4/mau-2 family. Interacts with Nipped-B to form the cohesin loading complex.

It localises to the nucleus. Its subcellular location is the nucleoplasm. Required for association of the cohesin complex with chromatin during interphase. Plays a role in sister chromatid cohesion and normal progression through prometaphase. This is MAU2 chromatid cohesion factor homolog from Drosophila virilis (Fruit fly).